The primary structure comprises 417 residues: Serine hydroxymethyltransferase (417 aa).

Residues Leu-121 and 125–127 (GHL) contribute to the (6S)-5,6,7,8-tetrahydrofolate site. Lys-229 bears the N6-(pyridoxal phosphate)lysine mark. 355–357 (SPF) serves as a coordination point for (6S)-5,6,7,8-tetrahydrofolate.

This sequence belongs to the SHMT family. In terms of assembly, homodimer. It depends on pyridoxal 5'-phosphate as a cofactor.

Its subcellular location is the cytoplasm. The enzyme catalyses (6R)-5,10-methylene-5,6,7,8-tetrahydrofolate + glycine + H2O = (6S)-5,6,7,8-tetrahydrofolate + L-serine. The protein operates within one-carbon metabolism; tetrahydrofolate interconversion. Its pathway is amino-acid biosynthesis; glycine biosynthesis; glycine from L-serine: step 1/1. Functionally, catalyzes the reversible interconversion of serine and glycine with tetrahydrofolate (THF) serving as the one-carbon carrier. This reaction serves as the major source of one-carbon groups required for the biosynthesis of purines, thymidylate, methionine, and other important biomolecules. Also exhibits THF-independent aldolase activity toward beta-hydroxyamino acids, producing glycine and aldehydes, via a retro-aldol mechanism. In Tolumonas auensis (strain DSM 9187 / NBRC 110442 / TA 4), this protein is Serine hydroxymethyltransferase.